The following is a 32-amino-acid chain: Snaclec (32 aa).

In terms of assembly, dimer; disulfide-linked. As to expression, expressed by the venom gland.

The protein resides in the secreted. Interferes with one step of hemostasis (modulation of platelet aggregation, or coagulation cascade, for example). The polypeptide is Snaclec (Bothrops diporus (Chaco lancehead)).